The following is a 72-amino-acid chain: Sec-independent protein translocase protein TatA (72 aa).

The chain crosses the membrane as a helical span at residues Met-1–Phe-21.

It belongs to the TatA/E family. As to quaternary structure, the Tat system comprises two distinct complexes: a TatABC complex, containing multiple copies of TatA, TatB and TatC subunits, and a separate TatA complex, containing only TatA subunits. Substrates initially bind to the TatABC complex, which probably triggers association of the separate TatA complex to form the active translocon.

Its subcellular location is the cell inner membrane. Part of the twin-arginine translocation (Tat) system that transports large folded proteins containing a characteristic twin-arginine motif in their signal peptide across membranes. TatA could form the protein-conducting channel of the Tat system. The polypeptide is Sec-independent protein translocase protein TatA (Marinomonas sp. (strain MWYL1)).